The chain runs to 311 residues: tRNA pseudouridine synthase B (311 aa).

Aspartate 49 (nucleophile) is an active-site residue.

Belongs to the pseudouridine synthase TruB family. Type 1 subfamily.

It catalyses the reaction uridine(55) in tRNA = pseudouridine(55) in tRNA. In terms of biological role, responsible for synthesis of pseudouridine from uracil-55 in the psi GC loop of transfer RNAs. This chain is tRNA pseudouridine synthase B, found in Actinobacillus succinogenes (strain ATCC 55618 / DSM 22257 / CCUG 43843 / 130Z).